A 242-amino-acid chain; its full sequence is Orotidine 5'-phosphate decarboxylase (242 aa).

Substrate-binding positions include Asp-16, Lys-37, 64 to 73 (DLKFHDIPNT), Thr-128, Arg-190, Gln-199, Gly-219, and Arg-220. The active-site Proton donor is Lys-66.

Belongs to the OMP decarboxylase family. Type 1 subfamily. Homodimer.

The catalysed reaction is orotidine 5'-phosphate + H(+) = UMP + CO2. It functions in the pathway pyrimidine metabolism; UMP biosynthesis via de novo pathway; UMP from orotate: step 2/2. Its function is as follows. Catalyzes the decarboxylation of orotidine 5'-monophosphate (OMP) to uridine 5'-monophosphate (UMP). This is Orotidine 5'-phosphate decarboxylase from Prochlorococcus marinus (strain MIT 9312).